A 344-amino-acid chain; its full sequence is Golgi-associated RAB2 interactor protein 1B (344 aa).

Residues 271–293 (FRSSRKVETNKNSSGKDSSREDS) form a disordered region.

The protein belongs to the GARIN family.

Its subcellular location is the golgi apparatus. Its function is as follows. RAB2B effector protein required for accurate acrosome formation and normal male fertility. In complex with RAB2A/RAB2B, seems to suppress excessive vesicle trafficking during acrosome formation. The chain is Golgi-associated RAB2 interactor protein 1B from Homo sapiens (Human).